A 98-amino-acid polypeptide reads, in one-letter code: DNA-binding protein Fis (98 aa).

Positions 74–93 (QTRAATMLGINRGTLRKKLK) form a DNA-binding region, H-T-H motif.

It belongs to the transcriptional regulatory Fis family. In terms of assembly, homodimer.

In terms of biological role, activates ribosomal RNA transcription. Plays a direct role in upstream activation of rRNA promoters. This is DNA-binding protein Fis from Glaesserella parasuis serovar 5 (strain SH0165) (Haemophilus parasuis).